Reading from the N-terminus, the 600-residue chain is NADH-ubiquinone oxidoreductase chain 5 (600 aa).

16 helical membrane passes run 1–21 (MYILVLTVPLLGALVSGLFGR), 27–47 (GAGIFTSGCLIISLSWSLLIF), 81–101 (LTAVMLIVVTSISTLVHIFST), 110–130 (VPRFMSYLSLFTFFMILLVTS), 136–156 (LFIGWEGVGLCSYLLINFWLT), 178–198 (FVLAMLAIWDQFGCLDFASVF), 200–220 (IVALAPSDNTTLICLFLFIGA), 241–261 (TPVSALIHAATMVTAGVFLLI), 274–294 (LMVVTIVGSLTAFMAATIGLV), 301–323 (VIAYSTCSQLGYMVMACGLSQYS), 327–347 (FHLMNHAFFKALLFLSAGSVI), 366–386 (IPFTYTMIVIGSLSLMGFPYL), 404–424 (YLAFAHWLGVFSALLTAAYSL), 450–470 (WNLTLPLILLALGSIFVGYLT), 488–508 (SIKLMPVIFSLFGAGTAVVLY), and 520–540 (SPVGLAGYTFLYSAWQFNYII).

It belongs to the complex I subunit 5 family.

It localises to the mitochondrion inner membrane. It carries out the reaction a ubiquinone + NADH + 5 H(+)(in) = a ubiquinol + NAD(+) + 4 H(+)(out). Core subunit of the mitochondrial membrane respiratory chain NADH dehydrogenase (Complex I) that is believed to belong to the minimal assembly required for catalysis. Complex I functions in the transfer of electrons from NADH to the respiratory chain. The immediate electron acceptor for the enzyme is believed to be ubiquinone. The protein is NADH-ubiquinone oxidoreductase chain 5 (ND5) of Metridium senile (Brown sea anemone).